A 777-amino-acid chain; its full sequence is UPF0313 protein VP1980 (777 aa).

Positions 363 to 642 (AYDMIKTSVN…KALLRYHDPA (280 aa)) constitute a Radical SAM core domain. Cysteine 377, cysteine 381, and cysteine 384 together coordinate [4Fe-4S] cluster. Residues 675–777 (AQTPAQRRKS…PAGQRKPKRR (103 aa)) are disordered. Basic residues predominate over residues 680–698 (QRRKSGRHGANRFATKHTK). Over residues 709–719 (KRAEGGSKDGK) the composition is skewed to basic and acidic residues. Residues 736–747 (PASNGQRPSGNG) show a composition bias toward polar residues. Over residues 755–769 (KPQGQGRPQGQGKPA) the composition is skewed to low complexity.

This sequence belongs to the UPF0313 family. [4Fe-4S] cluster is required as a cofactor.

The protein is UPF0313 protein VP1980 of Vibrio parahaemolyticus serotype O3:K6 (strain RIMD 2210633).